A 651-amino-acid chain; its full sequence is Probable export ATP-binding/permease protein Pfl01_2215 (651 aa).

An ABC transporter domain is found at 6-244 (LQLTGISRSF…LSNEDAVPKS (239 aa)). 42 to 49 (GASGSGKS) lines the ATP pocket. Transmembrane regions (helical) follow at residues 250–270 (LVAS…ALIS), 276–296 (LLTM…SAIG), 524–544 (LALL…IGVM), 585–605 (LGGA…SLFI), and 614–634 (LTSV…FGFV).

This sequence belongs to the ABC transporter superfamily. Macrolide exporter (TC 3.A.1.122) family. In terms of assembly, probably part of a tripartite efflux system, which is composed of an inner membrane transporter, a periplasmic membrane fusion protein, and an outer membrane component.

The protein localises to the cell inner membrane. Functionally, probably part of a tripartite efflux system. The polypeptide is Probable export ATP-binding/permease protein Pfl01_2215 (Pseudomonas fluorescens (strain Pf0-1)).